The chain runs to 60 residues: uncharacterized protein (60 aa).

An N-terminal signal peptide occupies residues 1–21; the sequence is MNKLLKLFFITIIIYNNIAFA.

This is an uncharacterized protein from Rickettsia prowazekii (strain Madrid E).